The following is a 252-amino-acid chain: MSDWNPSLYLHFAAERSRPAVELLARVSLENIEYIADLGCGTGNSTALLHQRWPAARITGIDSSPAMIAEARSALPDSLFVEADIRNWQPEQALDLIFANASLQWLPDHYELFPHLVSLLSPLGVLAVQMPDNWLEPTHVLMREVAWEQNYPDRGREPLAGVHAYYDILSEAGCEVDIWRTTYYHQMPSHQAIIDWVTATGLRPWLQDLTESEQQHFLTRYHQMLEEQYPLQENGQILLAFPRLFIVARRTE.

It belongs to the methyltransferase superfamily. Tam family.

It localises to the cytoplasm. It carries out the reaction trans-aconitate + S-adenosyl-L-methionine = (E)-3-(methoxycarbonyl)pent-2-enedioate + S-adenosyl-L-homocysteine. Its function is as follows. Catalyzes the S-adenosylmethionine monomethyl esterification of trans-aconitate. In Escherichia coli O1:K1 / APEC, this protein is Trans-aconitate 2-methyltransferase.